Here is a 372-residue protein sequence, read N- to C-terminus: Probable leucine aminopeptidase MCYG_08380 (372 aa).

An N-terminal signal peptide occupies residues 1–19; it reads MKVSVLAAVAAFAAATAIA. The N-linked (GlcNAc...) asparagine glycan is linked to Asn96. Positions 175 and 194 each coordinate Zn(2+). Residues Asn195 and Asn219 are each glycosylated (N-linked (GlcNAc...) asparagine). Zn(2+) contacts are provided by Glu233 and Asp260. A disulfide bond links Cys305 and Cys309. Position 338 (His338) interacts with Zn(2+).

Belongs to the peptidase M28 family. M28E subfamily. As to quaternary structure, monomer. Zn(2+) is required as a cofactor.

The protein resides in the secreted. In terms of biological role, probable extracellular aminopeptidase which contributes to pathogenicity. This Arthroderma otae (strain ATCC MYA-4605 / CBS 113480) (Microsporum canis) protein is Probable leucine aminopeptidase MCYG_08380.